The primary structure comprises 116 residues: Large ribosomal subunit protein eL18 (116 aa).

The protein belongs to the eukaryotic ribosomal protein eL18 family. In terms of assembly, part of the 50S ribosomal subunit. Interacts weakly with proteins L4 and L15. Has been cross-linked to L4.

Its function is as follows. Stabilizes the tertiary rRNA structure within the 23S rRNA domain (domain II) to which it binds. This is Large ribosomal subunit protein eL18 (rpl18e) from Haloarcula marismortui (strain ATCC 43049 / DSM 3752 / JCM 8966 / VKM B-1809) (Halobacterium marismortui).